Here is a 1470-residue protein sequence, read N- to C-terminus: Calmodulin-regulated spectrin-associated protein 2 (1470 aa).

The 114-residue stretch at 222 to 335 folds into the Calponin-homology (CH) domain; the sequence is WKLVPARYRK…FMAELFWWFE (114 aa). Positions 374 to 397 are disordered; that stretch reads SSSSSDFTSRYTRPQTHSSVSGGI. The segment covering 380–390 has biased composition (polar residues); the sequence is FTSRYTRPQTH. Phosphoserine is present on residues Ser402 and Ser404. Thr412 carries the phosphothreonine modification. 5 positions are modified to phosphoserine: Ser450, Ser581, Ser582, Ser594, and Ser656. Disordered stretches follow at residues 580 to 622 and 648 to 712; these read QSSP…EDSS and ASNP…EGSE. At Thr661 the chain carries Phosphothreonine. Ser663 carries the post-translational modification Phosphoserine. Residues 663–682 are compositionally biased toward low complexity; that stretch reads STKSQPGSSASSSSGVKMTS. The segment covering 686–696 has biased composition (basic and acidic residues); that stretch reads QKFRKLNHTDG. Residues 739–776 adopt a coiled-coil conformation; it reads LLASEMVHLRMRLEEKRRAIEAQKKKMEAAFTKQRQKM. Residues 796–835 show a composition bias toward basic and acidic residues; the sequence is REEAAGAEDEKVYTDRAKEKESQKMDGQRSKSLADIKESM. The tract at residues 796–864 is disordered; it reads REEAAGAEDE…QWNLTSPSEE (69 aa). A Phosphoserine modification is found at Ser845. Residues 870–909 adopt a coiled-coil conformation; it reads ELLEYTKSIEKLNSSLHFLQQEMQRLSLQQEMLMQMREQQ. Positions 905–1016 are MBD region; the sequence is MREQQSWVIS…IQTRSFVCFG (112 aa). Residues Ser914 and Ser919 each carry the phosphoserine modification. Disordered stretches follow at residues 930–1059 and 1078–1099; these read RQAG…PLES and NEDQ…PTAP. Residues 935–946 are compositionally biased toward low complexity; sequence SSAAAPFSADSP. Residues 952–971 show a composition bias toward polar residues; the sequence is SPQSSTRKSASFSVKNQRTP. Phosphothreonine is present on residues Thr979, Thr984, and Thr986. Phosphoserine occurs at positions 990 and 1001. Positions 1001–1011 are enriched in polar residues; sequence SPSQVPIQTRS. Basic and acidic residues-rich tracts occupy residues 1020-1037 and 1044-1056; these read EPQK…EPSE and SCDH…EVKP. The segment covering 1086–1098 has biased composition (pro residues); that stretch reads TDPPPKPVFPPTA. Phosphoserine is present on Ser1129. Residues 1147–1219 are a coiled coil; the sequence is KDDQKAENDM…REFIRQEYMR (73 aa). Over residues 1167 to 1233 the composition is skewed to basic and acidic residues; sequence RLRREKETQL…KLMEDMDTVI (67 aa). The tract at residues 1167–1327 is disordered; sequence RLRREKETQL…TTSSVASGTE (161 aa). The span at 1268 to 1280 shows a compositional bias: polar residues; that stretch reads SSLSLASLNTGDT. A phosphoserine mark is found at Ser1294, Ser1300, and Ser1302. Over residues 1315–1327 the composition is skewed to polar residues; the sequence is NASTTSSVASGTE. In terms of domain architecture, CKK spans 1330-1464; it reads GPKLYKEPSA…QTKRPVTPKK (135 aa).

This sequence belongs to the CAMSAP1 family. In terms of assembly, interacts with CAMSAP3. Interacts with KATNA1 and KATNB1; leading to regulate the length of CAMSAP2-decorated microtubule stretches. Interacts with a complex formed by AKAP9 and PDE4DIP; this interaction, which is PDE4DIP isoform-specific, recruits CAMSAP2 to the Golgi. Interacts with MAPRE1/EB1. As to expression, present in the soma, axon, and dendritic shaft of hippocampal neurons (at protein level).

It is found in the cytoplasm. The protein resides in the cytoskeleton. It localises to the golgi apparatus. Its subcellular location is the cilium basal body. Functionally, key microtubule-organizing protein that specifically binds the minus-end of non-centrosomal microtubules and regulates their dynamics and organization. Specifically recognizes growing microtubule minus-ends and autonomously decorates and stabilizes microtubule lattice formed by microtubule minus-end polymerization. Acts on free microtubule minus-ends that are not capped by microtubule-nucleating proteins or other factors and protects microtubule minus-ends from depolymerization. In addition, it also reduces the velocity of microtubule polymerization. Through the microtubule cytoskeleton, also regulates the organization of cellular organelles including the Golgi and the early endosomes. Essential for the tethering, but not for nucleation of non-centrosomal microtubules at the Golgi: together with Golgi-associated proteins AKAP9 and PDE4DIP, required to tether non-centrosomal minus-end microtubules to the Golgi, an important step for polarized cell movement. Also acts as a regulator of neuronal polarity and development: localizes to non-centrosomal microtubule minus-ends in neurons and stabilizes non-centrosomal microtubules, which is required for neuronal polarity, axon specification and dendritic branch formation. Through the microtubule cytoskeleton, regulates the autophagosome transport. The chain is Calmodulin-regulated spectrin-associated protein 2 from Rattus norvegicus (Rat).